Consider the following 92-residue polypeptide: Small ribosomal subunit protein uS19c (92 aa).

Belongs to the universal ribosomal protein uS19 family.

The protein resides in the plastid. The protein localises to the chloroplast. Protein S19 forms a complex with S13 that binds strongly to the 16S ribosomal RNA. The protein is Small ribosomal subunit protein uS19c of Angiopteris evecta (Mule's foot fern).